We begin with the raw amino-acid sequence, 1910 residues long: A disintegrin and metalloproteinase with thrombospondin motifs 20 (1910 aa).

Positions 1–21 are cleaved as a signal peptide; the sequence is MWVAKWLTGLLYHLSLFITRS. A propeptide spanning residues 22–253 is cleaved from the precursor; that stretch reads WEVDFHPRQE…DERRHSRKKR (232 aa). Residues Asn-92 and Asn-191 are each glycosylated (N-linked (GlcNAc...) asparagine). A Peptidase M12B domain is found at 259 to 467; it reads RYIEIMVTAD…GYGECLLDKP (209 aa). Cystine bridges form between Cys-334/Cys-387, Cys-363/Cys-369, Cys-381/Cys-462, Cys-419/Cys-446, Cys-489/Cys-511, Cys-500/Cys-521, Cys-506/Cys-540, Cys-534/Cys-545, Cys-568/Cys-605, Cys-572/Cys-610, and Cys-583/Cys-595. His-403 contributes to the Zn(2+) binding site. Glu-404 is an active-site residue. Residues His-407 and His-413 each coordinate Zn(2+). Asn-445 is a glycosylation site (N-linked (GlcNAc...) asparagine). The region spanning 468–555 is the Disintegrin domain; sequence DEEIYNLPSE…VNKETETRPV (88 aa). The 56-residue stretch at 556 to 611 folds into the TSP type-1 1 domain; the sequence is NGEWGPWEPYSSCSRTCGGGIESATRRCNRPEPRNGGNYCVGRRMKFRSCNTDSCP. N-linked (GlcNAc...) asparagine glycosylation is found at Asn-702, Asn-717, Asn-728, Asn-809, and Asn-870. A spacer region spans residues 724-846; that stretch reads TGVFNSSHYG…FNIPLEERSD (123 aa). 14 consecutive TSP type-1 domains span residues 846–904, 905–961, 966–1023, 1024–1073, 1076–1135, 1152–1206, 1207–1264, 1304–1356, 1358–1416, 1417–1475, 1476–1531, 1535–1588, 1589–1652, and 1654–1710; these read DMFT…NTDC, ELRW…QELC, VFTR…FSCP, SWAA…SPCE, TCAS…TPCS, KMAQ…DCFT, PCGE…AACP, RGNQ…QCGP, PCPQ…HACP, ADVS…VRCP, SWKA…QDCV, GMER…NPPC, NYIV…INSC, and HLAT…NDCK. Asn-1061 carries N-linked (GlcNAc...) asparagine glycosylation. The N-linked (GlcNAc...) asparagine glycan is linked to Asn-1456. N-linked (GlcNAc...) asparagine glycans are attached at residues Asn-1542 and Asn-1572. In terms of domain architecture, GON spans 1711–1910; sequence SFTTCKEIQV…MTTGLPIQVI (200 aa). N-linked (GlcNAc...) asparagine glycosylation is found at Asn-1763, Asn-1781, and Asn-1852.

The cofactor is Zn(2+). Post-translationally, the precursor is cleaved by a furin endopeptidase. Glycosylated. Can be O-fucosylated by POFUT2 on a serine or a threonine residue found within the consensus sequence C1-X(2)-(S/T)-C2-G of the TSP type-1 repeat domains where C1 and C2 are the first and second cysteine residue of the repeat, respectively. Fucosylated repeats can then be further glycosylated by the addition of a beta-1,3-glucose residue by the glucosyltransferase, B3GALTL. Fucosylation mediates the efficient secretion of ADAMTS family members. Can also be C-glycosylated with one or two mannose molecules on tryptophan residues within the consensus sequence W-X-X-W of the TPRs, and N-glycosylated. These other glycosylations can also facilitate secretion. In terms of tissue distribution, very sparingly expressed, although is detected at low levels in testis, prostate, ovary, heart, placenta, lung and pancreas. Overexpressed in several brain, colon and breast carcinomas.

The protein resides in the secreted. It is found in the extracellular space. It localises to the extracellular matrix. In terms of biological role, may play a role in tissue-remodeling process occurring in both normal and pathological conditions. May have a protease-independent function in the transport from the endoplasmic reticulum to the Golgi apparatus of secretory cargos, mediated by the GON domain. The polypeptide is A disintegrin and metalloproteinase with thrombospondin motifs 20 (ADAMTS20) (Homo sapiens (Human)).